A 266-amino-acid polypeptide reads, in one-letter code: Expansin-A13 (266 aa).

The signal sequence occupies residues 1-19 (MQRFLLPLLFLALSPPAIC). The region spanning 58–171 (GGACGYGDLV…RRINCRKEGS (114 aa)) is the Expansin-like EG45 domain. Residues 181-260 (IFISVLITNV…NWNYGQTFEG (80 aa)) form the Expansin-like CBD domain.

It belongs to the expansin family. Expansin A subfamily.

It is found in the secreted. The protein localises to the cell wall. The protein resides in the membrane. In terms of biological role, causes loosening and extension of plant cell walls by disrupting non-covalent bonding between cellulose microfibrils and matrix glucans. No enzymatic activity has been found. This is Expansin-A13 (EXPA13) from Arabidopsis thaliana (Mouse-ear cress).